Reading from the N-terminus, the 156-residue chain is Small ribosomal subunit protein uS7 (156 aa).

This sequence belongs to the universal ribosomal protein uS7 family. As to quaternary structure, part of the 30S ribosomal subunit. Contacts proteins S9 and S11.

One of the primary rRNA binding proteins, it binds directly to 16S rRNA where it nucleates assembly of the head domain of the 30S subunit. Is located at the subunit interface close to the decoding center, probably blocks exit of the E-site tRNA. The protein is Small ribosomal subunit protein uS7 of Salmonella agona (strain SL483).